A 350-amino-acid polypeptide reads, in one-letter code: S-adenosylmethionine:tRNA ribosyltransferase-isomerase (350 aa).

Belongs to the QueA family. As to quaternary structure, monomer.

The protein localises to the cytoplasm. The enzyme catalyses 7-aminomethyl-7-carbaguanosine(34) in tRNA + S-adenosyl-L-methionine = epoxyqueuosine(34) in tRNA + adenine + L-methionine + 2 H(+). It participates in tRNA modification; tRNA-queuosine biosynthesis. In terms of biological role, transfers and isomerizes the ribose moiety from AdoMet to the 7-aminomethyl group of 7-deazaguanine (preQ1-tRNA) to give epoxyqueuosine (oQ-tRNA). This is S-adenosylmethionine:tRNA ribosyltransferase-isomerase from Vibrio campbellii (strain ATCC BAA-1116).